The chain runs to 321 residues: Basic leucine zipper 34 (321 aa).

The disordered stretch occupies residues 97-189 (TDDDNLHSNP…SGNRILDPKR (93 aa)). 3 stretches are compositionally biased toward low complexity: residues 110 to 133 (NNKN…NSFN), 145 to 155 (NMNNNINNNYN), and 172 to 182 (SNNNSGDSSGN). Residues 186–238 (DPKRVKRILANRQSAQRSRVRKLQYISELERSVTSLQAEVSVLSPRVAFLDHQ) enclose the bZIP domain. The basic motif stretch occupies residues 188-207 (KRVKRILANRQSAQRSRVRK). The interval 214–235 (LERSVTSLQAEVSVLSPRVAFL) is leucine-zipper.

In terms of assembly, forms heterodimers with BZIP18, BZIP43 and VIP1/BZIP51. In terms of tissue distribution, expressed in vascular tissues of leaves, stems and siliques, anthers, filaments, tapetum, mature pollen grains, pistil vascular tissues and papillar cells, and funiculi.

Its subcellular location is the nucleus. Functionally, transcriptional activator involved in the sporophytic control of cell wall patterning and gametophytic control of pollen development. May play a role in the control of metabolic pathways regulating cellular transport and lipid metabolism. The protein is Basic leucine zipper 34 of Arabidopsis thaliana (Mouse-ear cress).